Consider the following 364-residue polypeptide: MGMQCPICETQSHVFYCAHCINSSPDLLIRLKFDLYILGKINNALRNKVDQYLEEVDDELNTNIRNGEQLESNIGVQILKERLGKVQVLRKERQNNKIKHKISQQDRRIKEKSRYIAELRSLINGPPKNQNRFTDPQTILKAQKQLQDKLEIAKRLSIQTRSEKLAMLNKWYSIRKRDSHDIPFTISYQPVISLKNFNRLPLPLIEGSLRKLIQYMNLLEHIYCIKYPSAMFVHEDEMLSLQGHSAKLKRNAPELLQVLIKLIQMILVVMTRSKLIDERKQNIDYAWILDQYDIDGLFYHMAMSIPIDTKSGAKNIQWSTDRLVDIVCSSLGAEKEEVLLKDHKKLEPPTDKKYEVSDRWYIVG.

Residues 5-20 (CPICETQSHVFYCAHC) are cysteine repeats. The stretch at 38–114 (LGKINNALRN…QDRRIKEKSR (77 aa)) forms a coiled coil.

This sequence belongs to the ATG14 family. In terms of assembly, component of the autophagy-specific VPS34 PI3-kinase complex I composed of VPS15, VPS30, VPS34, ATG14 and ATG38. Interacts directly with ATG38.

Its subcellular location is the preautophagosomal structure membrane. The protein localises to the vacuole membrane. Its function is as follows. Required for cytoplasm to vacuole transport (Cvt) and autophagy as a part of the autophagy-specific VPS34 PI3-kinase complex I. This complex is essential to recruit the ATG8-phosphatidylinositol conjugate and the ATG12-ATG5 conjugate to the pre-autophagosomal structure. ATG14 mediates the specific binding of the VPS34 PI3-kinase complex I to the preautophagosomal structure (PAS). Required for survival and/or proliferation in kidneys and in brain. The polypeptide is Autophagy-related protein 14 (Candida glabrata (strain ATCC 2001 / BCRC 20586 / JCM 3761 / NBRC 0622 / NRRL Y-65 / CBS 138) (Yeast)).